We begin with the raw amino-acid sequence, 901 residues long: Nuclear factor of activated T-cells, cytoplasmic 4 (901 aa).

Residues 1-11 (MGAASCEDEEL) are compositionally biased toward acidic residues. Disordered stretches follow at residues 1–180 (MGAA…SSWS) and 203–361 (NEAA…TEDS). Positions 61 to 81 (IPRPPPPRPGMHSPPPRPAPS) are enriched in pro residues. Positions 96–109 (GGPGGTAGGTGGGR) are enriched in gly residues. Residues 114-119 (PSIRIT) form a calcineurin-binding region. The segment covering 114 to 123 (PSIRITSISP) has biased composition (low complexity). Gly residues predominate over residues 151–165 (GFGGYREAGGQGGGA). Low complexity predominate over residues 166-180 (FFSPSPGSSSLSSWS). S168, S170, S213, and S217 each carry phosphoserine. The SP 1 repeat unit spans residues 213–229 (SPLPSPRASPRPWTPED). The 2 approximate SP repeats stretch occupies residues 213–293 (SPLPSPRASP…LSRRGSLGEE (81 aa)). Composition is skewed to pro residues over residues 215 to 227 (LPSPRASPRPWTP) and 254 to 263 (GPIPASPRPA). The Nuclear localization signal signature appears at 268–270 (KRR). The segment covering 272 to 288 (SSSGTPSSASPALSRRG) has biased composition (low complexity). One copy of the SP 2; approximate repeat lies at 277 to 293 (PSSASPALSRRGSLGEE). Phosphoserine occurs at positions 289, 334, and 344. The 182-residue stretch at 401–582 (SALPPLDWPL…VPIECSQRSA (182 aa)) folds into the RHD domain. Residues 430–437 (RAHYETEG) mediate DNA binding. The region spanning 586-683 (PQVEAYSPSA…KRSPTQSFKF (98 aa)) is the IPT/TIG domain. Residues 672-674 (RRK) carry the Nuclear localization signal motif. Residue K689 forms a Glycyl lysine isopeptide (Lys-Gly) (interchain with G-Cter in SUMO2) linkage. Disordered regions lie at residues 697-721 (SLRGFPSTSGPPFGPDMDFSPPRPP) and 791-868 (QYGG…GFRD). Residues 805–822 (FSPPAPFRPPLPSSPPLE) show a composition bias toward pro residues.

Member of the multicomponent NFATC transcription complex that consists of at least two components, a pre-existing cytoplasmic component NFATC2 and an inducible nuclear component NFATC1. Other NFAT proteins, such as NFATC4, NFATC3, or members of the activating protein-1 (AP-1) family and MAF can also bind the complex. NFAT proteins can bind DNA as monomers or dimers. Component of a promoter-binding complex composed of STAT3, NFATC3 and NFATC4; complex formation is enhanced by calcineurin. Interacts with CREBBP; this interaction potentiates transcription activation. Interacts with MAPK8/JNK1 and MAPK9/JNK2. Interacts with GATA4 (via the second Zn finger). Interacts (via N-terminus) with IRAK1 (via C-terminus). Interacts with RPS6KA3. Interacts with HOMER1, HOMER2 and HOMER3; this interaction competes with calcineurin/PPP3CA-binding and hence prevents NFATC4 dephosphorylation and activation. Interacts with ESR1 and ESR2; this interaction decreases NFATC4 transcriptional activity. Interacts with MTOR and MAPK7/ERK5. Interacts with TRIM17; this interaction prevents NFATC3 nuclear localization. Interacts with TCF25 (via C-terminus); the interaction leads to suppression of NFATC4 transcription factor activity and is reduced following stimulation with angiotensin-2. Post-translationally, phosphorylated by NFATC-kinases; dephosphorylated by calcineurin/PPP3CA. Phosphorylated on Ser-168 and Ser-170 by MTOR, IRAK1, MAPK7/ERK5 and MAPK14/p38, on Ser-213 and Ser-217 by MAPK8 and MAPK9, and on Ser-289 and Ser-344 by RPS6KA3. Phosphorylated by GSK3B; this phosphorylation markedly increases NFATC4 ubiquitination. Phosphorylation by MAPK8/JNK1, MAPK9/JNK2 and RPS6KA3 may stimulate NFATC4 transcriptional activity. Phosphorylation at Ser-168 and Ser-170 is stimulated by UV irradiation. In terms of processing, ubiquitinated, leading to degradation by the proteasome. Ubiquitination may be stimulated by GSK3B-dependent phosphorylation. Polyubiquitin linkage mainly occurs through 'Lys-48'. Expressed in heart (at protein level).

It is found in the cytoplasm. The protein resides in the nucleus. Ca(2+)-regulated transcription factor that is involved in several processes, including the development and function of the immune, cardiovascular, musculoskeletal, and nervous systems. Involved in T-cell activation, stimulating the transcription of cytokine genes, including that of IL2 and IL4. Along with NFATC3, involved in embryonic heart development. Following JAK/STAT signaling activation and as part of a complex with NFATC3 and STAT3, binds to the alpha-beta E4 promoter region of CRYAB and activates transcription in cardiomyocytes. Involved in mitochondrial energy metabolism required for cardiac morphogenesis and function. Transactivates many genes involved in heart physiology. Along with GATA4, binds to and activates NPPB/BNP promoter. Activates NPPA/ANP/ANF and MYH7/beta-MHC transcription. Binds to and transactivates AGTR2 gene promoter. Involved in the regulation of adult hippocampal neurogenesis. Involved in BDNF-driven pro-survival signaling in hippocampal adult-born neurons. Involved in the formation of long-term spatial memory and long-term potentiation. In cochlear nucleus neurons, may play a role in deafferentation-induced apoptosis during a developmental critical period when auditory neurons depend on afferent input for survival. Binds to and activates the BACE1/Beta-secretase 1 promoter, hence may regulate the proteolytic processing of the amyloid precursor protein (APP). Plays a role in adipocyte differentiation. May be involved in myoblast differentiation into myotubes. Binds the consensus DNA sequence 5'-GGAAAAT-3'. In the presence of CREBBP, activates TNF transcription. Binds to PPARG gene promoter and regulates its activity. Binds to PPARG and REG3G gene promoters. The sequence is that of Nuclear factor of activated T-cells, cytoplasmic 4 (Nfatc4) from Rattus norvegicus (Rat).